Consider the following 207-residue polypeptide: Putative 3-methyladenine DNA glycosylase (207 aa).

Positions 182–193 (PAPAGARAARAP) are enriched in low complexity. The interval 182 to 207 (PAPAGARAARAPAPAPRPRRPRGSGP) is disordered. Residues 198–207 (RPRRPRGSGP) show a composition bias toward basic residues.

The protein belongs to the DNA glycosylase MPG family.

This chain is Putative 3-methyladenine DNA glycosylase, found in Anaeromyxobacter dehalogenans (strain 2CP-C).